Reading from the N-terminus, the 145-residue chain is Large ribosomal subunit protein uL11 (145 aa).

The protein belongs to the universal ribosomal protein uL11 family. Part of the ribosomal stalk of the 50S ribosomal subunit. Interacts with L10 and the large rRNA to form the base of the stalk. L10 forms an elongated spine to which L12 dimers bind in a sequential fashion forming a multimeric L10(L12)X complex. In terms of processing, one or more lysine residues are methylated.

Functionally, forms part of the ribosomal stalk which helps the ribosome interact with GTP-bound translation factors. This chain is Large ribosomal subunit protein uL11, found in Sulfurihydrogenibium sp. (strain YO3AOP1).